Consider the following 480-residue polypeptide: Probable cyclodipeptide synthase PUL1 (480 aa).

Its pathway is siderophore biosynthesis. Its function is as follows. Probable cyclodipeptide synthase; part of the PUL gene cluster that mediates the formation of pulcherrimin, a red iron-containing pigment composed of two cyclized and modified leucine molecules that acts as a siderophore, a chelator that binds iron outside the cell for subsequent uptake. Two leucine molecules are cyclized via a cyclodipeptide synthase, and the resulting diketopiperazine is oxidized by a cytochrome P450 monooxygenase to generate pulcherriminic acid (PA), which can then spontaneously bind iron to form pulcherrimin. The probable cyclodipeptide synthase PUL1 and the cytochrome P450 monooxygenase PUL2 encode the enzymes responsible for the two-step pulcherrimin biosynthesis pathway. This chain is Probable cyclodipeptide synthase PUL1, found in Kluyveromyces lactis (strain ATCC 8585 / CBS 2359 / DSM 70799 / NBRC 1267 / NRRL Y-1140 / WM37) (Yeast).